A 240-amino-acid polypeptide reads, in one-letter code: Izumo sperm-egg fusion protein 3 (240 aa).

A signal peptide spans 1–22; the sequence is MGDLWLLLLLPLSLAAFHGVKG. At 23-176 the chain is on the extracellular side; it reads CLECDPKFIE…DDPKKAESRE (154 aa). A helical transmembrane segment spans residues 177-197; sequence IGLFLILLAEGVILGGVLLLF. The Cytoplasmic segment spans residues 198–240; that stretch reads HFCISHQRKMKAIRRSLKTYLEKKLEELMGIKDEKEKDFRGRE.

This sequence belongs to the Izumo family. As to quaternary structure, monomer and homodimer.

Its subcellular location is the cell membrane. This is Izumo sperm-egg fusion protein 3 (IZUMO3) from Bos taurus (Bovine).